We begin with the raw amino-acid sequence, 485 residues long: Eukaryotic translation initiation factor 3 subunit E (485 aa).

The PCI domain occupies 219 to 391 (NQPDGPDGIV…GEIHITKPVT (173 aa)). The segment at 444–485 (QGGGKSNKKGDYKKGDYKKGGDFKKGGDFKKGGDHKKRAWVK) is disordered. The segment covering 451–475 (KKGDYKKGDYKKGGDFKKGGDFKKG) has biased composition (basic and acidic residues). Over residues 476–485 (GDHKKRAWVK) the composition is skewed to basic residues.

Belongs to the eIF-3 subunit E family. In terms of assembly, component of the eukaryotic translation initiation factor 3 (eIF-3) complex.

It is found in the cytoplasm. Its function is as follows. Component of the eukaryotic translation initiation factor 3 (eIF-3) complex, which is involved in protein synthesis of a specialized repertoire of mRNAs and, together with other initiation factors, stimulates binding of mRNA and methionyl-tRNAi to the 40S ribosome. The eIF-3 complex specifically targets and initiates translation of a subset of mRNAs involved in cell proliferation. The polypeptide is Eukaryotic translation initiation factor 3 subunit E (Monosiga brevicollis (Choanoflagellate)).